Here is a 767-residue protein sequence, read N- to C-terminus: Granule-bound starch synthase 2, chloroplastic/amyloplastic (767 aa).

The N-terminal 45 residues, 1–45 (MENSILLHSGNQFHPNLPLLALRPKKLSLIHGSSREQMWRIKRVK), are a transit peptide targeting the chloroplast. 2 disordered regions span residues 160–204 (KRDL…SSQE) and 226–268 (YMPS…EKPP). Low complexity predominate over residues 172 to 188 (SRSSITASSQISSTVSS). Over residues 230–245 (LRKESSASHVEQRNEN) the composition is skewed to basic and acidic residues. Residues 253-262 (ANEETEDPVN) are compositionally biased toward acidic residues. K290 contributes to the ADP-alpha-D-glucose binding site.

It belongs to the glycosyltransferase 1 family. Bacterial/plant glycogen synthase subfamily.

It localises to the plastid. It is found in the chloroplast. The protein localises to the amyloplast. It catalyses the reaction [(1-&gt;4)-alpha-D-glucosyl](n) + ADP-alpha-D-glucose = [(1-&gt;4)-alpha-D-glucosyl](n+1) + ADP + H(+). It functions in the pathway glycan biosynthesis; starch biosynthesis. Functionally, accounts for only 10 to 15% of the total soluble starch synthase activity in tubers. This is Granule-bound starch synthase 2, chloroplastic/amyloplastic (SS2) from Solanum tuberosum (Potato).